Consider the following 717-residue polypeptide: Mitochondrial potassium channel ATP-binding subunit (717 aa).

A mitochondrion-targeting transit peptide spans 1-25 (MLVHLFRFGIRGGPVPGWSLQSLRF). The next 4 helical transmembrane spans lie at 127–147 (LLALGAAIVLALGAALVNVQI), 178–198 (VQLLLLYGVQGLLTFGYLVLL), 278–298 (LMLAVVTPALMGVGTLMGSGL), and 365–385 (NIAFNCMVLGTLFIGGSLVAG). In terms of domain architecture, ABC transmembrane type-1 spans 132-419 (AAIVLALGAA…LSVLFGQVVR (288 aa)). Residues 454–691 (ITFQNVTFSY…GGLYSELIRR (238 aa)) enclose the ABC transporter domain. 489–496 (GQSGGGKT) is an ATP binding site. The disordered stretch occupies residues 695 to 717 (DASLTSTPPAEKPEDPKSCQSKA).

It belongs to the ABC transporter superfamily. ABCB family. Multidrug resistance exporter (TC 3.A.1.201) subfamily. As to quaternary structure, the mitochondrial potassium channel (mitoK(ATP)) is composed of 4 subunits of CCDC51/MITOK and 4 subunits of ABCB8/MITOSUR. Interacts with PAAT. Interacts with NRP1; NRP1 regulates ABCB8/MITOSUR protein levels in mitochondria.

Its subcellular location is the mitochondrion inner membrane. With respect to regulation, channel activity inhibited by ATP via ABCB8/MITOSUR subunit. Its function is as follows. ATP-binding subunit of the mitochondrial ATP-gated potassium channel (mitoK(ATP)). Together with pore-forming subunit CCDC51/MITOK of the mitoK(ATP) channel, mediates ATP-dependent potassium currents across the mitochondrial inner membrane. An increase in ATP intracellular levels closes the channel, inhibiting K(+) transport, whereas a decrease in ATP levels enhances K(+) uptake in the mitochondrial matrix. Plays a role in mitochondrial iron transport. Required for maintenance of normal cardiac function, possibly by influencing mitochondrial iron export and regulating the maturation of cytosolic iron sulfur cluster-containing enzymes. In Mus musculus (Mouse), this protein is Mitochondrial potassium channel ATP-binding subunit.